Consider the following 607-residue polypeptide: Polypeptide N-acetylgalactosaminyltransferase 18 (607 aa).

Topologically, residues 1 to 12 (MVCTRKTKTLVS) are cytoplasmic. Residues 13–35 (TCVILSGMTNIICLLYVGWVTNY) form a helical; Signal-anchor for type II membrane protein membrane-spanning segment. Over 36–607 (IASVYVRGQE…ITNVLRSLAS (572 aa)) the chain is Lumenal. Cystine bridges form between Cys144–Cys377, Cys368–Cys447, Cys482–Cys498, Cys530–Cys543, and Cys571–Cys591. An N-linked (GlcNAc...) asparagine glycan is attached at Asn146. The catalytic subdomain A stretch occupies residues 153–267 (LPEVSIVFIF…VGWAEPVLTR (115 aa)). Asp194 is a binding site for substrate. An N-linked (GlcNAc...) asparagine glycan is attached at Asn195. Asp251 and His253 together coordinate Mn(2+). A glycan (N-linked (GlcNAc...) asparagine) is linked at Asn320. Residues 324–385 (PIRSPALIGC…PCSRIAHIER (62 aa)) form a catalytic subdomain B region. His382 provides a ligand contact to Mn(2+). Arg385 and Tyr390 together coordinate substrate. One can recognise a Ricin B-type lectin domain in the interval 469–599 (AYGVLQNSLK…KCSGQHWSIT (131 aa)).

Belongs to the glycosyltransferase 2 family. GalNAc-T subfamily. The cofactor is Mn(2+).

It is found in the golgi apparatus membrane. The enzyme catalyses L-seryl-[protein] + UDP-N-acetyl-alpha-D-galactosamine = a 3-O-[N-acetyl-alpha-D-galactosaminyl]-L-seryl-[protein] + UDP + H(+). The catalysed reaction is L-threonyl-[protein] + UDP-N-acetyl-alpha-D-galactosamine = a 3-O-[N-acetyl-alpha-D-galactosaminyl]-L-threonyl-[protein] + UDP + H(+). The protein operates within protein modification; protein glycosylation. Its function is as follows. Catalyzes the initial reaction in O-linked oligosaccharide biosynthesis, the transfer of an N-acetyl-D-galactosamine (GalNAc) residue from UDP-GalNAc to a serine or threonine residue on the protein receptor. The protein is Polypeptide N-acetylgalactosaminyltransferase 18 (GALNT18) of Homo sapiens (Human).